A 590-amino-acid chain; its full sequence is Aspartate--tRNA(Asp/Asn) ligase (590 aa).

An L-aspartate-binding site is contributed by Glu172. The tract at residues 196–199 (QLFK) is aspartate. Arg218 provides a ligand contact to L-aspartate. ATP-binding positions include 218-220 (RDE) and Gln227. His449 is an L-aspartate binding site. Glu484 is a binding site for ATP. Position 491 (Arg491) interacts with L-aspartate. 536 to 539 (GVDR) is a binding site for ATP.

The protein belongs to the class-II aminoacyl-tRNA synthetase family. Type 1 subfamily. As to quaternary structure, homodimer.

Its subcellular location is the cytoplasm. It catalyses the reaction tRNA(Asx) + L-aspartate + ATP = L-aspartyl-tRNA(Asx) + AMP + diphosphate. Functionally, aspartyl-tRNA synthetase with relaxed tRNA specificity since it is able to aspartylate not only its cognate tRNA(Asp) but also tRNA(Asn). Reaction proceeds in two steps: L-aspartate is first activated by ATP to form Asp-AMP and then transferred to the acceptor end of tRNA(Asp/Asn). The chain is Aspartate--tRNA(Asp/Asn) ligase from Francisella tularensis subsp. tularensis (strain WY96-3418).